Here is a 141-residue protein sequence, read N- to C-terminus: Large ribosomal subunit protein uL11B/uL11C (141 aa).

The protein belongs to the universal ribosomal protein uL11 family. In terms of assembly, part of the ribosomal stalk of the 50S ribosomal subunit. Interacts with L10 and the large rRNA to form the base of the stalk. L10 forms an elongated spine to which L12 dimers bind in a sequential fashion forming a multimeric L10(L12)X complex. One or more lysine residues are methylated.

Functionally, forms part of the ribosomal stalk which helps the ribosome interact with GTP-bound translation factors. The sequence is that of Large ribosomal subunit protein uL11B/uL11C from Bacillus cereus (strain ATCC 14579 / DSM 31 / CCUG 7414 / JCM 2152 / NBRC 15305 / NCIMB 9373 / NCTC 2599 / NRRL B-3711).